A 255-amino-acid chain; its full sequence is Triosephosphate isomerase (255 aa).

9–11 (NWK) lines the substrate pocket. The Electrophile role is filled by H95. E167 functions as the Proton acceptor in the catalytic mechanism. Substrate contacts are provided by residues G173, S212, and 233-234 (GG).

It belongs to the triosephosphate isomerase family. Homodimer.

Its subcellular location is the cytoplasm. It catalyses the reaction D-glyceraldehyde 3-phosphate = dihydroxyacetone phosphate. The protein operates within carbohydrate biosynthesis; gluconeogenesis. Its pathway is carbohydrate degradation; glycolysis; D-glyceraldehyde 3-phosphate from glycerone phosphate: step 1/1. In terms of biological role, involved in the gluconeogenesis. Catalyzes stereospecifically the conversion of dihydroxyacetone phosphate (DHAP) to D-glyceraldehyde-3-phosphate (G3P). This Enterobacter cloacae protein is Triosephosphate isomerase.